The primary structure comprises 716 residues: ATP-dependent DNA helicase DinG (716 aa).

The Helicase ATP-binding domain maps to 17–294 (ALQEQIPDFI…TCMEQFRPKT (278 aa)). 54–61 (APTGVGKT) serves as a coordination point for ATP. Cys120 contributes to the [4Fe-4S] cluster binding site. The DEAH box motif lies at 131–134 (EPTQ). [4Fe-4S] cluster is bound by residues Cys194, Cys199, and Cys205. A DEAH box motif is present at residues 248-251 (DEGH). The Helicase C-terminal domain maps to 517 to 698 (HIAEMAAFFR…VFPIEQPEVP (182 aa)).

It belongs to the helicase family. DinG subfamily. Type 1 sub-subfamily. Requires [4Fe-4S] cluster as cofactor.

The catalysed reaction is Couples ATP hydrolysis with the unwinding of duplex DNA at the replication fork by translocating in the 5'-3' direction. This creates two antiparallel DNA single strands (ssDNA). The leading ssDNA polymer is the template for DNA polymerase III holoenzyme which synthesizes a continuous strand.. The enzyme catalyses ATP + H2O = ADP + phosphate + H(+). In terms of biological role, DNA-dependent ATPase and 5'-3' DNA helicase. Unwinds D-loops, R-loops, forked DNA and G-quadruplex DNA. This is ATP-dependent DNA helicase DinG from Escherichia coli O157:H7.